We begin with the raw amino-acid sequence, 120 residues long: Large ribosomal subunit protein uL18 (120 aa).

The protein belongs to the universal ribosomal protein uL18 family. Part of the 50S ribosomal subunit; part of the 5S rRNA/L5/L18/L25 subcomplex. Contacts the 5S and 23S rRNAs.

This is one of the proteins that bind and probably mediate the attachment of the 5S RNA into the large ribosomal subunit, where it forms part of the central protuberance. The chain is Large ribosomal subunit protein uL18 from Halalkalibacterium halodurans (strain ATCC BAA-125 / DSM 18197 / FERM 7344 / JCM 9153 / C-125) (Bacillus halodurans).